We begin with the raw amino-acid sequence, 164 residues long: Phosphopantetheine adenylyltransferase (164 aa).

Residue Ser9 coordinates substrate. ATP is bound by residues 9 to 10 (SF) and His17. Residues Lys41, Leu78, and Arg92 each contribute to the substrate site. ATP contacts are provided by residues 93-95 (GLR), Glu103, and 128-134 (GRVITST).

It belongs to the bacterial CoaD family. In terms of assembly, homohexamer. The cofactor is Mg(2+).

The protein localises to the cytoplasm. The catalysed reaction is (R)-4'-phosphopantetheine + ATP + H(+) = 3'-dephospho-CoA + diphosphate. It functions in the pathway cofactor biosynthesis; coenzyme A biosynthesis; CoA from (R)-pantothenate: step 4/5. Reversibly transfers an adenylyl group from ATP to 4'-phosphopantetheine, yielding dephospho-CoA (dPCoA) and pyrophosphate. The chain is Phosphopantetheine adenylyltransferase from Bartonella bacilliformis (strain ATCC 35685 / KC583 / Herrer 020/F12,63).